A 353-amino-acid chain; its full sequence is Probable WRKY transcription factor 7 (353 aa).

The segment at 117–259 (VEEKKPETSS…SSRCHCSKKR (143 aa)) is disordered. A compositionally biased stretch (low complexity) spans 158–176 (SHNNNNNQNQTKNGSSSSS). Polar residues-rich tracts occupy residues 184–204 (APST…SFMS) and 213–229 (THMS…QLSG). The segment at residues 275-341 (KMADIPSDEF…YEGDHNHALV (67 aa)) is a DNA-binding region (WRKY).

The protein belongs to the WRKY group II-d family. As to expression, in young, mature and senescent leaves.

The protein localises to the nucleus. Functionally, transcription factor. Interacts specifically with the W box (5'-(T)TGAC[CT]-3'), a frequently occurring elicitor-responsive cis-acting element. The polypeptide is Probable WRKY transcription factor 7 (WRKY7) (Arabidopsis thaliana (Mouse-ear cress)).